Here is a 405-residue protein sequence, read N- to C-terminus: Imidazolonepropionase (405 aa).

His-70 and His-72 together coordinate Fe(3+). Positions 70 and 72 each coordinate Zn(2+). Arg-79, Tyr-142, and His-175 together coordinate 4-imidazolone-5-propanoate. Residue Tyr-142 coordinates N-formimidoyl-L-glutamate. Position 240 (His-240) interacts with Fe(3+). Zn(2+) is bound at residue His-240. Gln-243 serves as a coordination point for 4-imidazolone-5-propanoate. Asp-315 provides a ligand contact to Fe(3+). Asp-315 serves as a coordination point for Zn(2+). The N-formimidoyl-L-glutamate site is built by Asn-317 and Gly-319. Thr-320 lines the 4-imidazolone-5-propanoate pocket.

The protein belongs to the metallo-dependent hydrolases superfamily. HutI family. Requires Zn(2+) as cofactor. The cofactor is Fe(3+).

Its subcellular location is the cytoplasm. It carries out the reaction 4-imidazolone-5-propanoate + H2O = N-formimidoyl-L-glutamate. The protein operates within amino-acid degradation; L-histidine degradation into L-glutamate; N-formimidoyl-L-glutamate from L-histidine: step 3/3. Functionally, catalyzes the hydrolytic cleavage of the carbon-nitrogen bond in imidazolone-5-propanoate to yield N-formimidoyl-L-glutamate. It is the third step in the universal histidine degradation pathway. This Ectopseudomonas mendocina (strain ymp) (Pseudomonas mendocina) protein is Imidazolonepropionase.